Consider the following 117-residue polypeptide: Immunoglobulin heavy variable 1-2 (117 aa).

An N-terminal signal peptide occupies residues 1 to 19 (MDWTWRILFLVAAATGAHS). Position 20 is a pyrrolidone carboxylic acid (Gln-20). Residues 20–44 (QVQLVQSGAEVKKPGASVKVSCKAS) are framework-1. An Ig-like domain is found at 20-117 (QVQLVQSGAE…DDTAVYYCAR (98 aa)). Cys-41 and Cys-115 are oxidised to a cystine. Residues 45 to 52 (GYTFTGYY) form a complementarity-determining-1 region. Residues 53–69 (MHWVRQAPGQGLEWMGW) form a framework-2 region. The segment at 70 to 77 (INPNSGGT) is complementarity-determining-2. The segment at 78-115 (NYAQKFQGWVTMTRDTSISTAYMELSRLRSDDTAVYYC) is framework-3. Residues 116-117 (AR) form a complementarity-determining-3 region.

As to quaternary structure, immunoglobulins are composed of two identical heavy chains and two identical light chains; disulfide-linked.

The protein resides in the secreted. Its subcellular location is the cell membrane. V region of the variable domain of immunoglobulin heavy chains that participates in the antigen recognition. Immunoglobulins, also known as antibodies, are membrane-bound or secreted glycoproteins produced by B lymphocytes. In the recognition phase of humoral immunity, the membrane-bound immunoglobulins serve as receptors which, upon binding of a specific antigen, trigger the clonal expansion and differentiation of B lymphocytes into immunoglobulins-secreting plasma cells. Secreted immunoglobulins mediate the effector phase of humoral immunity, which results in the elimination of bound antigens. The antigen binding site is formed by the variable domain of one heavy chain, together with that of its associated light chain. Thus, each immunoglobulin has two antigen binding sites with remarkable affinity for a particular antigen. The variable domains are assembled by a process called V-(D)-J rearrangement and can then be subjected to somatic hypermutations which, after exposure to antigen and selection, allow affinity maturation for a particular antigen. This chain is Immunoglobulin heavy variable 1-2, found in Homo sapiens (Human).